The following is a 555-amino-acid chain: CTP synthase (555 aa).

The interval 1–267 (MAKFVFVTGG…CKEVLDCLDL (267 aa)) is amidoligase domain. S13 serves as a coordination point for CTP. S13 serves as a coordination point for UTP. ATP contacts are provided by residues 14-19 (SIGKGI) and D71. Mg(2+) is bound by residues D71 and E141. Residues 148-150 (DIE), 188-193 (KTKPTQ), and K224 contribute to the CTP site. Residues 188-193 (KTKPTQ) and K224 contribute to the UTP site. The 243-residue stretch at 292-534 (KVALVGKYVQ…IQAAQIRVPS (243 aa)) folds into the Glutamine amidotransferase type-1 domain. Position 354 (G354) interacts with L-glutamine. C381 functions as the Nucleophile; for glutamine hydrolysis in the catalytic mechanism. Residues 382–385 (LGMQ), E405, and R462 contribute to the L-glutamine site. Residues H507 and E509 contribute to the active site. The interval 536-555 (PSEAFNPQSKIIEKKSLEQQ) is disordered. Basic and acidic residues predominate over residues 546-555 (IIEKKSLEQQ).

Belongs to the CTP synthase family. As to quaternary structure, homotetramer.

It catalyses the reaction UTP + L-glutamine + ATP + H2O = CTP + L-glutamate + ADP + phosphate + 2 H(+). The catalysed reaction is L-glutamine + H2O = L-glutamate + NH4(+). The enzyme catalyses UTP + NH4(+) + ATP = CTP + ADP + phosphate + 2 H(+). It functions in the pathway pyrimidine metabolism; CTP biosynthesis via de novo pathway; CTP from UDP: step 2/2. With respect to regulation, allosterically activated by GTP, when glutamine is the substrate; GTP has no effect on the reaction when ammonia is the substrate. The allosteric effector GTP functions by stabilizing the protein conformation that binds the tetrahedral intermediate(s) formed during glutamine hydrolysis. Inhibited by the product CTP, via allosteric rather than competitive inhibition. In terms of biological role, catalyzes the ATP-dependent amination of UTP to CTP with either L-glutamine or ammonia as the source of nitrogen. Regulates intracellular CTP levels through interactions with the four ribonucleotide triphosphates. In Prochlorococcus marinus (strain NATL1A), this protein is CTP synthase.